The chain runs to 166 residues: Interferon gamma (166 aa).

Residues 1–23 form the signal peptide; it reads MNYTSYILAFQLCVILGSSGCYC. At glutamine 24 the chain carries Pyrrolidone carboxylic acid. N-linked (GlcNAc...) asparagine glycosylation is found at asparagine 39 and asparagine 106. The segment at 147–166 is disordered; it reads SNLRKRKRRQNQIQGRRASK.

The protein belongs to the type II (or gamma) interferon family. In terms of assembly, homodimer. Interacts with IFNGR1 (via extracellular domain); this interaction promotes IFNGR1 dimerization. In terms of tissue distribution, released primarily from activated T lymphocytes.

The protein resides in the secreted. Functionally, type II interferon produced by immune cells such as T-cells and NK cells that plays crucial roles in antimicrobial, antiviral, and antitumor responses by activating effector immune cells and enhancing antigen presentation. Primarily signals through the JAK-STAT pathway after interaction with its receptor IFNGR1 to affect gene regulation. Upon IFNG binding, IFNGR1 intracellular domain opens out to allow association of downstream signaling components JAK2, JAK1 and STAT1, leading to STAT1 activation, nuclear translocation and transcription of IFNG-regulated genes. Many of the induced genes are transcription factors such as IRF1 that are able to further drive regulation of a next wave of transcription. Plays a role in class I antigen presentation pathway by inducing a replacement of catalytic proteasome subunits with immunoproteasome subunits. In turn, increases the quantity, quality, and repertoire of peptides for class I MHC loading. Increases the efficiency of peptide generation also by inducing the expression of activator PA28 that associates with the proteasome and alters its proteolytic cleavage preference. Up-regulates as well MHC II complexes on the cell surface by promoting expression of several key molecules such as cathepsins B/CTSB, H/CTSH, and L/CTSL. Participates in the regulation of hematopoietic stem cells during development and under homeostatic conditions by affecting their development, quiescence, and differentiation. The sequence is that of Interferon gamma (IFNG) from Lama glama (Llama).